Consider the following 181-residue polypeptide: ATP-dependent protease subunit HslV (181 aa).

T7 is an active-site residue. Positions 162, 165, and 168 each coordinate Na(+).

Belongs to the peptidase T1B family. HslV subfamily. A double ring-shaped homohexamer of HslV is capped on each side by a ring-shaped HslU homohexamer. The assembly of the HslU/HslV complex is dependent on binding of ATP.

It localises to the cytoplasm. The catalysed reaction is ATP-dependent cleavage of peptide bonds with broad specificity.. With respect to regulation, allosterically activated by HslU binding. Protease subunit of a proteasome-like degradation complex believed to be a general protein degrading machinery. The polypeptide is ATP-dependent protease subunit HslV (Coxiella burnetii (strain Dugway 5J108-111)).